The following is a 344-amino-acid chain: tRNA N6-adenosine threonylcarbamoyltransferase (344 aa).

Fe cation-binding residues include His-111 and His-115. Residues 134–138 (LVSGG), Asp-167, Gly-180, Asp-184, and Asn-277 contribute to the substrate site. Asp-305 provides a ligand contact to Fe cation.

The protein belongs to the KAE1 / TsaD family. It depends on Fe(2+) as a cofactor.

Its subcellular location is the cytoplasm. It catalyses the reaction L-threonylcarbamoyladenylate + adenosine(37) in tRNA = N(6)-L-threonylcarbamoyladenosine(37) in tRNA + AMP + H(+). In terms of biological role, required for the formation of a threonylcarbamoyl group on adenosine at position 37 (t(6)A37) in tRNAs that read codons beginning with adenine. Is involved in the transfer of the threonylcarbamoyl moiety of threonylcarbamoyl-AMP (TC-AMP) to the N6 group of A37, together with TsaE and TsaB. TsaD likely plays a direct catalytic role in this reaction. The chain is tRNA N6-adenosine threonylcarbamoyltransferase from Microcystis aeruginosa (strain NIES-843 / IAM M-2473).